We begin with the raw amino-acid sequence, 192 residues long: MRFLSTDMKDRNMLFAAIPSICASSPKKISIYNEEMIVARCFIGFLIFSRKSLGKTFKETLDGRIESIQEELLQFFNPNEVIPEESNEQQRLLRISLRICSTVVESLPTARCAPKCEKTVQALLCRNLNVKSATLLNATSSRRIRLQDDIVTGFHFSVSERFVSGSTFKASTIDLIREGLIVLRKVRVGGSI.

Residues 29-49 (ISIYNEEMIVARCFIGFLIFS) form a helical membrane-spanning segment.

It belongs to the ATPase protein MI25 family. In terms of assembly, F-type ATPases have 2 components, CF(1) - the catalytic core - and CF(0) - the membrane proton channel. CF(1) has five subunits: alpha(3), beta(3), gamma(1), delta(1), epsilon(1). CF(0) has three main subunits: a, b and c.

It localises to the mitochondrion membrane. Functionally, this is one of the chains of the nonenzymatic component (CF(0) subunit) of the mitochondrial ATPase complex. The sequence is that of ATP synthase protein MI25 from Triticum timopheevii (Timopheev's wheat).